Reading from the N-terminus, the 701-residue chain is Potassium-transporting ATPase ATP-binding subunit (701 aa).

Residues 1 to 28 (MNPDAPTPKNKSSRSRPSDRPQARKKAK) form a disordered region. 4 consecutive transmembrane segments (helical) span residues 57–77 (MFLVWVGTIITLSVTIEPNLF), 90–110 (GILTGILFFTVWFANFAEAVA), 245–265 (VLLAVLSLVFLFVVATLPVFA), and 276–296 (ILVALLVALIPTTIGGLLSAI). The active-site 4-aspartylphosphate intermediate is the D329. ATP-binding positions include D366, E370, 397–404 (FSAKTRMS), and K416. Residues D539 and D543 each coordinate Mg(2+). Helical transmembrane passes span 599-619 (FSLANDIAKYFAIIPVIFASA), 635-655 (AVLSALIYNALIIPALIPLAL), and 681-701 (VIAPFIAIKLIDVLITLVGLA).

The protein belongs to the cation transport ATPase (P-type) (TC 3.A.3) family. Type IA subfamily. The system is composed of three essential subunits: KdpA, KdpB and KdpC.

Its subcellular location is the cell membrane. It catalyses the reaction K(+)(out) + ATP + H2O = K(+)(in) + ADP + phosphate + H(+). Its function is as follows. Part of the high-affinity ATP-driven potassium transport (or Kdp) system, which catalyzes the hydrolysis of ATP coupled with the electrogenic transport of potassium into the cytoplasm. This subunit is responsible for energy coupling to the transport system and for the release of the potassium ions to the cytoplasm. This chain is Potassium-transporting ATPase ATP-binding subunit, found in Anabaena sp. (strain L31).